The chain runs to 132 residues: MAADLAGKWILESSENFDDYMKAVGVGMVMRKMANAATPTQEIKIDGDSWSIKTSTTFKTTDISFTIGQEFDETTGDGRKIKTTCKIDGNAMIQDQKGSPDSILSREVKDGKMHMILKVNDVVCTRIYKRVD.

Residues Arg-126 and Tyr-128 each contribute to the (9Z)-hexadecenoate site.

The protein belongs to the calycin superfamily. Fatty-acid binding protein (FABP) family. As to quaternary structure, interacts with Na(+)/Ca(2+) exchanger NCXSQ1; ReP1-NCXSQ phosphorylation does not affect the interaction. Phosphorylated. Phosphorylation may result in the release of the bound fatty acid. Expressed in the optic nerve (at protein level).

It localises to the cytoplasm. It is found in the membrane. Functionally, binds and may transport fatty acids such as palmitoleate. Also binds poly-phosphoinositides including phosphatidylinositol 4-phosphate (PtdIns(4)P), phosphatidylinositol 4,5-bisphosphate (PtdIns(4,5)P2) and phosphatidylinositol 3,4,5-trisphosphate (PtdIns(3,4,5)P3), and phosphatidic acid. When phosphorylated, stimulates the activity of optic nerve Na(+)/Ca(2+) exchanger. This Doryteuthis pealeii (Longfin inshore squid) protein is Sodium/calcium exchanger regulatory protein 1.